Here is a 464-residue protein sequence, read N- to C-terminus: Sushi-repeat-containing protein SRPX (464 aa).

Positions 1-30 (MGSPGLRPELLLPQVLPLLLALLHVLPSQG) are cleaved as a signal peptide. O-linked (Xyl...) (chondroitin sulfate) serine glycosylation is present at Ser-34. 5 disulfide bridges follow: Cys-57/Cys-85, Cys-69/Cys-103, Cys-89/Cys-115, Cys-120/Cys-161, and Cys-147/Cys-174. 2 consecutive Sushi domains span residues 57-117 (CSPI…ICKQ) and 118-176 (KRCP…SCVD). Residues 177-259 (LEPPRIKCPS…TCKFRVKVRV (83 aa)) enclose the HYR domain. Positions 260–319 (RRCGKLNAPENGYMKCSSDGDNYGATCEFSCIGGYELQGSPARVCQSNLAWSGTEPSCAA) constitute a Sushi 3 domain. 2 disulfide bridges follow: Cys-262/Cys-304 and Cys-290/Cys-317.

This chain is Sushi-repeat-containing protein SRPX (Srpx), found in Mus musculus (Mouse).